The following is a 976-amino-acid chain: Vacuolar membrane protease (976 aa).

Residues 1–15 (MKLKSVFRSVLKYRK) are Cytoplasmic-facing. The chain crosses the membrane as a helical span at residues 16-36 (TNLSLLLLITYSIITLLYIFD). The Vacuolar portion of the chain corresponds to 37–359 (HERYKLNLPK…KFFVISAKTL (323 aa)). 2 N-linked (GlcNAc...) asparagine glycosylation sites follow: N96 and N121. H156 and D168 together coordinate Zn(2+). A glycan (N-linked (GlcNAc...) asparagine) is linked at N189. Catalysis depends on E200, which acts as the Proton acceptor. Residue E201 coordinates Zn(2+). N217 carries an N-linked (GlcNAc...) asparagine glycan. Residues E226 and H300 each coordinate Zn(2+). A helical transmembrane segment spans residues 360–380 (FYWNCIFLLVSPVVAIGLYLI). Residues 381–392 (SRDRMTWKSYSW) lie on the Cytoplasmic side of the membrane. Residues 393–412 (LSWTRFPLSLAAGIIVQKLF) traverse the membrane as a helical segment. The Vacuolar segment spans residues 413-428 (SNDIIRSNPLTFSRNY). Residues 429–449 (FWPISAFFTQVIFTSYVLINC) traverse the membrane as a helical segment. Residues 450–461 (SNFFFPCADMKS) are Cytoplasmic-facing. A helical transmembrane segment spans residues 462-482 (LSIIELFIILWTILLFTSKLL). Residues 483–496 (YSSDYRYTGLYPLS) are Vacuolar-facing. A helical transmembrane segment spans residues 497-517 (IFFLLSTIAAILRLLALALGM). The Cytoplasmic segment spans residues 518 to 627 (RTRKRLGREC…NSLKLEYTDY (110 aa)). The disordered stretch occupies residues 528 to 610 (RDHHSNYSSH…PLLKGSNSME (83 aa)). Residues 549 to 558 (NLEQPQDQLT) show a composition bias toward polar residues. Over residues 559-570 (SSQDDQASIQDD) the composition is skewed to low complexity. Residues 582-601 (NVDEDHGMDSSSQQHDERVP) are compositionally biased toward basic and acidic residues. A helical transmembrane segment spans residues 628 to 648 (AWIIQFLLIVPIPSFILFNSV). Residues 649 to 668 (DVIMDALNHTVQEGSKATFD) are Vacuolar-facing. N656 carries an N-linked (GlcNAc...) asparagine glycan. Residues 669–689 (VLRFGMVGSILIALPILPFFY) traverse the membrane as a helical segment. Over 690–692 (KVN) the chain is Cytoplasmic. Residues 693–713 (YITISLTALLFLISASKTLLV) traverse the membrane as a helical segment. Residues 714 to 976 (HPFTNSNPLK…LVIVKDAIIL (263 aa)) lie on the Vacuolar side of the membrane. 5 N-linked (GlcNAc...) asparagine glycosylation sites follow: N768, N796, N811, N866, and N937.

The protein belongs to the peptidase M28 family. The cofactor is Zn(2+). N-glycosylated.

The protein resides in the vacuole membrane. Functionally, may be involved in vacuolar sorting and osmoregulation. The sequence is that of Vacuolar membrane protease from Saccharomyces cerevisiae (strain ATCC 204508 / S288c) (Baker's yeast).